A 593-amino-acid polypeptide reads, in one-letter code: NADH-quinone oxidoreductase subunit C/D (593 aa).

The interval 1–184 (MTADNAIFIP…DPYSLTLAKQ (184 aa)) is NADH dehydrogenase I subunit C. The NADH dehydrogenase I subunit D stretch occupies residues 208–593 (DYMFLNLGPN…IDFVMADVDR (386 aa)).

The protein in the N-terminal section; belongs to the complex I 30 kDa subunit family. In the C-terminal section; belongs to the complex I 49 kDa subunit family. NDH-1 is composed of 13 different subunits. Subunits NuoB, CD, E, F, and G constitute the peripheral sector of the complex.

The protein resides in the cell inner membrane. It catalyses the reaction a quinone + NADH + 5 H(+)(in) = a quinol + NAD(+) + 4 H(+)(out). Its function is as follows. NDH-1 shuttles electrons from NADH, via FMN and iron-sulfur (Fe-S) centers, to quinones in the respiratory chain. The immediate electron acceptor for the enzyme in this species is believed to be ubiquinone. Couples the redox reaction to proton translocation (for every two electrons transferred, four hydrogen ions are translocated across the cytoplasmic membrane), and thus conserves the redox energy in a proton gradient. The protein is NADH-quinone oxidoreductase subunit C/D of Pseudomonas putida (strain ATCC 47054 / DSM 6125 / CFBP 8728 / NCIMB 11950 / KT2440).